A 470-amino-acid polypeptide reads, in one-letter code: ATP synthase subunit beta (470 aa).

G155–T162 lines the ATP pocket.

Belongs to the ATPase alpha/beta chains family. As to quaternary structure, F-type ATPases have 2 components, CF(1) - the catalytic core - and CF(0) - the membrane proton channel. CF(1) has five subunits: alpha(3), beta(3), gamma(1), delta(1), epsilon(1). CF(0) has three main subunits: a(1), b(2) and c(9-12). The alpha and beta chains form an alternating ring which encloses part of the gamma chain. CF(1) is attached to CF(0) by a central stalk formed by the gamma and epsilon chains, while a peripheral stalk is formed by the delta and b chains.

It localises to the cell membrane. It carries out the reaction ATP + H2O + 4 H(+)(in) = ADP + phosphate + 5 H(+)(out). Its function is as follows. Produces ATP from ADP in the presence of a proton gradient across the membrane. The catalytic sites are hosted primarily by the beta subunits. In Staphylococcus aureus (strain MW2), this protein is ATP synthase subunit beta.